We begin with the raw amino-acid sequence, 953 residues long: Coatomer subunit beta (953 aa).

The residue at position 2 (T2) is an N-acetylthreonine. 6 HEAT repeats span residues 96 to 131 (HEMI…KEAE), 132 to 168 (LLEP…NFEH), 240 to 276 (SERA…SAPT), 277 to 314 (AIKA…HPAH), 316 to 353 (RVLQ…SRNV), and 396 to 433 (DMAA…RFDN). An N6-acetyllysine modification is found at K494.

As to quaternary structure, oligomeric complex that consists of at least the alpha, beta, beta', gamma, delta, epsilon and zeta subunits. Interacts with ARF1 (myristoylated); this interaction is required for binding of COPB1 to Golgi membranes. Interacts with CAPN8 and PRKCE. Interacts with SCYL1. Interacts with COPG1. Interacts (via trunk domain) with ARF1 (via switch I region); the interaction is direct. Interacts with KCNK2 (via N-terminus); this interaction increases the channel-mediated whole cell currents and promotes plasma membrane expression of KCNK2. Interacts with STX17. Interacts with TMEM115. Interacts with TMEM41B. Proteolytically cleaved between Ser-528 and Ser-529 by CAPN8.

The protein localises to the cytoplasm. Its subcellular location is the cytosol. It localises to the golgi apparatus membrane. It is found in the cytoplasmic vesicle. The protein resides in the COPI-coated vesicle membrane. The protein localises to the cell membrane. Its subcellular location is the endoplasmic reticulum-Golgi intermediate compartment. Its function is as follows. The coatomer is a cytosolic protein complex that binds to dilysine motifs and reversibly associates with Golgi non-clathrin-coated vesicles, which further mediate biosynthetic protein transport from the ER, via the Golgi up to the trans Golgi network. Coatomer complex is required for budding from Golgi membranes, and is essential for the retrograde Golgi-to-ER transport of dilysine-tagged proteins. In mammals, the coatomer can only be recruited by membranes associated to ADP-ribosylation factors (ARFs), which are small GTP-binding proteins; the complex also influences the Golgi structural integrity, as well as the processing, activity, and endocytic recycling of LDL receptors. Involved in the Golgi disassembly and reassembly processes during cell cycle. Plays a functional role in facilitating the transport of kappa-type opioid receptor mRNAs into axons and enhances translation of these proteins. Required for limiting lipid storage in lipid droplets. Involved in lipid homeostasis by regulating the presence of perilipin family members PLIN2 and PLIN3 at the lipid droplet surface and promoting the association of adipocyte surface triglyceride lipase (PNPLA2) with the lipid droplet to mediate lipolysis. Involved in autophagy by playing a role in early endosome function. Plays a role in organellar compartmentalization of secretory compartments including endoplasmic reticulum (ER)-Golgi intermediate compartment (ERGIC), Golgi, trans-Golgi network (TGN) and recycling endosomes, and in biosynthetic transport of CAV1. In Bos taurus (Bovine), this protein is Coatomer subunit beta (COPB1).